The following is a 51-amino-acid chain: Ribosomal protein eL39-like 2 (51 aa).

Belongs to the eukaryotic ribosomal protein eL39 family. As to quaternary structure, component of a male germ cell-specific 60S large ribosomal subunit (LSU), which contains RPL10L and RPL39L, instead of RPL10 and RPL39 paralogs. The composition of the rest of the complex is similar to classical ribosomes. In terms of tissue distribution, testis specific.

The protein localises to the cytoplasm. Male germ cell-specific component of the ribosome, which is required for the formation of sperm and male fertility. Replaces the RPL39 paralog in the ribosome of male germ cells. The ribosome is a large ribonucleoprotein complex responsible for the synthesis of proteins in the cell. The male germ cell-specific ribosome displays a ribosomal polypeptide exit tunnel of distinct size and charge states compared with the classical ribosome. It is responsible for regulating the biosynthesis and folding of a subset of male germ-cell-specific proteins that are essential for the formation of sperm. The protein is Ribosomal protein eL39-like 2 of Homo sapiens (Human).